The primary structure comprises 396 residues: Potassium channel subfamily K member 9 (396 aa).

Residues M1–T8 lie on the Cytoplasmic side of the membrane. A helical membrane pass occupies residues L9–L29. The Extracellular portion of the chain corresponds to E30–I88. N53 carries N-linked (GlcNAc...) asparagine glycosylation. An intramembrane region (pore-forming) is located at residues T89 to P101. K(+) is bound by residues T93, I94, G95, and Y96. A selectivity filter 1 region spans residues T93–H98. The Extracellular portion of the chain corresponds to G102–K107. The chain crosses the membrane as a helical span at residues A108–L128. Over G129 to N158 the chain is Cytoplasmic. A helical membrane pass occupies residues M159–S179. Over Q180–F194 the chain is Extracellular. Positions I195–A207 form an intramembrane region, pore-forming. K(+)-binding residues include T199, I200, G201, and F202. The segment at T199–D204 is selectivity filter 2. Residues L208 to P218 are Extracellular-facing. Residues F219–L239 traverse the membrane as a helical segment. At N240–I396 the chain is on the cytoplasmic side. Residues V243 to T248 form an X-gate region.

This sequence belongs to the two pore domain potassium channel (TC 1.A.1.8) family. Homodimer. Heterodimer with KCNK1. Heterodimer with KCNK3. As to expression, highly expressed in the CNS and at lower levels in the colon, kidney, liver, lung, spleen, stomach and skeletal muscle. The highest expression was found in the olfactory nuclei, piriform cortex, cerebellum, antedorsal thalmic nucleus, pontine nucleus, dorsal raphe and several nuclei in the medulla. Shows a non-homogeneous distribution in the hippocampus. Expressed at highest levels in the lateral posterior and inferior portions and at medium levels in neocortex. Expressed in motoneurons, including hypoglossal motoneurons (at protein level).

The protein localises to the cell membrane. It localises to the mitochondrion inner membrane. It is found in the cell projection. Its subcellular location is the dendrite. The catalysed reaction is K(+)(in) = K(+)(out). The enzyme catalyses Na(+)(in) = Na(+)(out). With respect to regulation, activated by halothane and isoflurane. Inhibited by external acidification, diacylglycerol, anandamide and AGT/angiotensin II. Ruthenium red inhibits homomeric but not KCNK3:KCNK9 heteromeric channels. K(+) channel that conducts voltage-dependent outward rectifying currents upon membrane depolarization. Voltage sensing is coupled to K(+) electrochemical gradient in an 'ion flux gating' mode where outward but not inward ion flow opens the gate. Changes ion selectivity and becomes permeable to Na(+) ions in response to extracellular acidification. Protonation of the pH sensor His-98 stabilizes C-type inactivation conformation likely converting the channel from outward K(+)-conducting, to inward Na(+)-conducting to nonconductive state. Homo- and heterodimerizes to form functional channels with distinct regulatory and gating properties. Allows K(+) currents with fast-gating kinetics important for the repolarization and hyperpolarization phases of action potentials. In granule neurons, hyperpolarizes the resting membrane potential to limit intrinsic neuronal excitability, but once the action potential threshold is reached, supports high-frequency action potential firing and increased neuronal excitability. Homomeric and/or heteromeric KCNK3:KCNK9 channels operate in cerebellar granule cells, whereas heteromeric KCNK1:KCNK9 enables currents in hippocampal dentate gyrus granule neurons. Dispensable for central chemosensory respiration i.e. breathing controlled by brainstem CO2/pH, it rather conducts pH-sensitive currents and controls the firing rate of serotonergic raphe neurons involved in potentiation of the respiratory chemoreflex. In retinal ganglion cells, mediates outward rectifying currents that regulate action potentials in response to acidification of the synaptic cleft. Involved in transmission of image-forming and nonimage-forming visual information in the retina. In adrenal gland, contributes to the maintenance of a hyperpolarized resting membrane potential of aldosterone-producing cells at zona glomerulosa and limits aldosterone release as part of a regulatory mechanism that controls arterial blood pressure and electrolyte homeostasis. In Rattus norvegicus (Rat), this protein is Potassium channel subfamily K member 9.